A 358-amino-acid chain; its full sequence is Protein-L-isoaspartate O-methyltransferase domain-containing protein 1 (358 aa).

Glycine 2 carries N-myristoyl glycine lipidation. The active site involves serine 64. AdoMet binding motif regions lie at residues 85 to 94, 160 to 164, and 181 to 191; these read LNLGSGTGYL, YDRIY, and LKVGGILVMPI. The BC-box stretch occupies residues 240-250; sequence VRNLQDLARIY. Residues 300-339 form a disordered region; sequence PLDSEEDERMEDDNKEEEDKDHSEALKPEEPPRNLLREKI. Residues 302–318 show a composition bias toward acidic residues; sequence DSEEDERMEDDNKEEED. A compositionally biased stretch (basic and acidic residues) spans 319-339; sequence KDHSEALKPEEPPRNLLREKI. Positions 342 to 345 are CUL-box; it reads LPLP.

It belongs to the methyltransferase superfamily. L-isoaspartyl/D-aspartyl protein methyltransferase family. As to quaternary structure, component of the probable ECS(PCMTD1) E3 ubiquitin-protein ligase complex, at least composed of CUL5, ELOB, ELOC, RBX2 and PCMTD1.

It is found in the cytoplasm. It localises to the membrane. Its function is as follows. Substrate recognition component of an ECS (Elongin BC-CUL5-SOCS-box protein) E3 ubiquitin ligase complex which mediates the ubiquitination and subsequent proteasomal degradation of target proteins. Specifically binds to the methyltransferase cofactor S-adenosylmethionine (AdoMet) via the N-terminal AdoMet binding motif, but does not display methyltransferase activity. May provide an alternate maintenance pathway for modified proteins by acting as a damage-specific E3 ubiquitin ligase adaptor protein. The sequence is that of Protein-L-isoaspartate O-methyltransferase domain-containing protein 1 (PCMTD1) from Gallus gallus (Chicken).